A 198-amino-acid chain; its full sequence is Proteasome subunit beta 1 (198 aa).

Residues 1-6 (MSGPGA) constitute a propeptide, removed in mature form; by autocatalysis. Residue Thr-7 is the Nucleophile of the active site.

This sequence belongs to the peptidase T1B family. In terms of assembly, the 20S proteasome core is composed of 14 alpha and 14 beta subunits that assemble into four stacked heptameric rings, resulting in a barrel-shaped structure. The two inner rings, each composed of seven catalytic beta subunits, are sandwiched by two outer rings, each composed of seven alpha subunits. The catalytic chamber with the active sites is on the inside of the barrel. Has a gated structure, the ends of the cylinder being occluded by the N-termini of the alpha-subunits. Is capped at one or both ends by the proteasome regulatory ATPase, PAN.

It is found in the cytoplasm. It catalyses the reaction Cleavage of peptide bonds with very broad specificity.. Its activity is regulated as follows. The formation of the proteasomal ATPase PAN-20S proteasome complex, via the docking of the C-termini of PAN into the intersubunit pockets in the alpha-rings, triggers opening of the gate for substrate entry. Interconversion between the open-gate and close-gate conformations leads to a dynamic regulation of the 20S proteasome proteolysis activity. Its function is as follows. Component of the proteasome core, a large protease complex with broad specificity involved in protein degradation. The chain is Proteasome subunit beta 1 from Ignicoccus hospitalis (strain KIN4/I / DSM 18386 / JCM 14125).